The following is a 1255-amino-acid chain: Bifunctional autolysin (1255 aa).

The N-terminal stretch at 1-36 is a signal peptide; it reads MLGVINRMAKKFNYKLPSMVALTLVGSAVTAHQVQA. 2 disordered regions span residues 110–141 and 193–218; these read GDTR…NTNV and VTTF…KYKP. The tract at residues 199–775 is N-acetylmuramoyl-L-alanine amidase; the sequence is SAQPRSVAAT…VAQPKTAVKA (577 aa). 7 consecutive GW domains span residues 442-516, 518-592, 611-685, 687-761, 783-858, 860-935, and 942-1016; these read TVAA…YNTA, SPVN…DTAK, TVSS…YNNA, SPVN…VPAA, TTQT…VQNL, KEVK…APTA, and AAKD…KELI. An endo-beta-N-acetylglucosaminidase region spans residues 776–1255; that stretch reads YTVTKPQTTQ…GKYFDIPQYK (480 aa).

The protein in the N-terminal section; belongs to the N-acetylmuramoyl-L-alanine amidase 2 family. It in the C-terminal section; belongs to the glycosyl hydrolase 73 family. As to quaternary structure, oligomer; forms a ring structure at the cell surface which is important for efficient partitioning of daughter cells after cell division. In terms of processing, undergoes proteolytic processing to generate the two extracellular lytic enzymes, probably at the septal region on the cell surface.

It localises to the secreted. It carries out the reaction Hydrolyzes the link between N-acetylmuramoyl residues and L-amino acid residues in certain cell-wall glycopeptides.. The catalysed reaction is an N(4)-(oligosaccharide-(1-&gt;3)-[oligosaccharide-(1-&gt;6)]-beta-D-Man-(1-&gt;4)-beta-D-GlcNAc-(1-&gt;4)-alpha-D-GlcNAc)-L-asparaginyl-[protein] + H2O = an oligosaccharide-(1-&gt;3)-[oligosaccharide-(1-&gt;6)]-beta-D-Man-(1-&gt;4)-D-GlcNAc + N(4)-(N-acetyl-beta-D-glucosaminyl)-L-asparaginyl-[protein]. Endohydrolysis of the di-N-acetylchitobiosyl unit in high-mannose glycopeptides and glycoproteins containing the -[(Man)5(GlcNAc)2]-Asn structure. One N-acetyl-D-glucosamine residue remains attached to the protein; the rest of the oligosaccharide is released intact. Cleaves the peptidoglycan connecting the daughter cells at the end of the cell division cycle, resulting in the separation of the two newly divided cells. Acts as an autolysin in penicillin-induced lysis. In Staphylococcus aureus (strain Mu3 / ATCC 700698), this protein is Bifunctional autolysin (atl).